We begin with the raw amino-acid sequence, 602 residues long: Potassium voltage-gated channel subfamily A member 5 (602 aa).

The interval methionine 1–glutamate 202 is tetramerization domain. The Cytoplasmic segment spans residues methionine 1–glycine 238. A disordered region spans residues glutamate 58 to serine 107. A Phosphoserine; by CK2 and PKA modification is found at serine 81. Lysine 212 is covalently cross-linked (Glycyl lysine isopeptide (Lys-Gly) (interchain with G-Cter in SUMO)). The chain crosses the membrane as a helical span at residues serine 239–leucine 260. Topologically, residues glutamate 261–proline 314 are extracellular. A helical membrane pass occupies residues phenylalanine 315 to alanine 336. A lipid anchor (S-palmitoyl cysteine) is attached at cysteine 337. Residues cysteine 337 to isoleucine 347 lie on the Cytoplasmic side of the membrane. The helical transmembrane segment at methionine 348–alanine 368 threads the bilayer. Topologically, residues glutamate 369 to serine 384 are extracellular. A helical; Voltage-sensor transmembrane segment spans residues leucine 385–histidine 405. Residues serine 406 to methionine 420 lie on the Cytoplasmic side of the membrane. The S4-S5 linker stretch occupies residues lysine 407 to methionine 420. A helical membrane pass occupies residues arginine 421–tyrosine 442. Residues phenylalanine 443–isoleucine 456 lie on the Extracellular side of the membrane. Positions proline 457–threonine 468 form an intramembrane region, helical. Positions threonine 469–aspartate 474 match the Selectivity filter motif. The stretch at threonine 469–arginine 476 is an intramembrane region. Topologically, residues proline 477–lysine 483 are extracellular. Residues isoleucine 484–tyrosine 512 traverse the membrane as a helical segment. The Cytoplasmic portion of the chain corresponds to histidine 513–leucine 602. Positions alanine 523–glycine 536 are enriched in basic and acidic residues. Positions alanine 523–arginine 543 are disordered. A Glycyl lysine isopeptide (Lys-Gly) (interchain with G-Cter in SUMO) cross-link involves residue lysine 525. Phosphoserine; by PKA is present on residues serine 535, serine 546, and serine 569. A PDZ-binding motif is present at residues threonine 600 to leucine 602.

It belongs to the potassium channel family. A (Shaker) (TC 1.A.1.2) subfamily. Kv1.5/KCNA5 sub-subfamily. As to quaternary structure, homotetramer and heterotetramer of potassium channel proteins. Interacts with DLG1, which enhances channel currents. Forms a ternary complex with DLG1 and CAV3. Interacts with KCNAB1. Interacts with UBE2I. Interacts with XIRP2; the interaction is required for normal action potential configuration in the heart. Glycosylated. Post-translationally, sumoylated on Lys-212, and Lys-525, preferentially with SUMO3. Sumoylation regulates the voltage sensitivity of the channel. As to expression, expressed equally in atrium, ventricle, aorta and skeletal muscle. Weaker expression in brain.

The protein resides in the cell membrane. The enzyme catalyses K(+)(in) = K(+)(out). Voltage-gated potassium channel that mediates transmembrane potassium transport in excitable membranes. Forms tetrameric potassium-selective channels through which potassium ions pass in accordance with their electrochemical gradient. The channel alternates between opened and closed conformations in response to the voltage difference across the membrane. Can form functional homotetrameric channels and heterotetrameric channels that contain variable proportions of KCNA1, KCNA2, KCNA4, KCNA5, and possibly other family members as well; channel properties depend on the type of alpha subunits that are part of the channel. Channel properties are modulated by cytoplasmic beta subunits that regulate the subcellular location of the alpha subunits and promote rapid inactivation. Homotetrameric channels display rapid activation and slow inactivation. Required for normal electrical conduction including formation of the infranodal ventricular conduction system and normal action potential configuration, as a result of its interaction with XIRP2. May play a role in regulating the secretion of insulin in normal pancreatic islets. The chain is Potassium voltage-gated channel subfamily A member 5 (Kcna5) from Rattus norvegicus (Rat).